We begin with the raw amino-acid sequence, 585 residues long: Phosphomethylpyrimidine synthase (585 aa).

The segment covering Arg-89–Tyr-107 has biased composition (basic and acidic residues). Positions Arg-89–His-116 are disordered. Substrate is bound by residues Asn-199, Met-228, Tyr-257, His-293, Ser-313–Gly-315, Asp-354–Arg-357, and Glu-393. Zn(2+) is bound at residue His-397. Residue Tyr-420 participates in substrate binding. His-461 is a Zn(2+) binding site. 3 residues coordinate [4Fe-4S] cluster: Cys-541, Cys-544, and Cys-549.

It belongs to the ThiC family. [4Fe-4S] cluster serves as cofactor.

It catalyses the reaction 5-amino-1-(5-phospho-beta-D-ribosyl)imidazole + S-adenosyl-L-methionine = 4-amino-2-methyl-5-(phosphooxymethyl)pyrimidine + CO + 5'-deoxyadenosine + formate + L-methionine + 3 H(+). It functions in the pathway cofactor biosynthesis; thiamine diphosphate biosynthesis. Catalyzes the synthesis of the hydroxymethylpyrimidine phosphate (HMP-P) moiety of thiamine from aminoimidazole ribotide (AIR) in a radical S-adenosyl-L-methionine (SAM)-dependent reaction. The chain is Phosphomethylpyrimidine synthase from Bacillus pumilus (strain SAFR-032).